We begin with the raw amino-acid sequence, 466 residues long: 3-isopropylmalate dehydratase large subunit (466 aa).

3 residues coordinate [4Fe-4S] cluster: Cys347, Cys407, and Cys410.

It belongs to the aconitase/IPM isomerase family. LeuC type 1 subfamily. As to quaternary structure, heterodimer of LeuC and LeuD. [4Fe-4S] cluster is required as a cofactor.

The catalysed reaction is (2R,3S)-3-isopropylmalate = (2S)-2-isopropylmalate. Its pathway is amino-acid biosynthesis; L-leucine biosynthesis; L-leucine from 3-methyl-2-oxobutanoate: step 2/4. Its function is as follows. Catalyzes the isomerization between 2-isopropylmalate and 3-isopropylmalate, via the formation of 2-isopropylmaleate. The polypeptide is 3-isopropylmalate dehydratase large subunit (Klebsiella pneumoniae (strain 342)).